The following is a 244-amino-acid chain: tRNA pseudouridine synthase A (244 aa).

Catalysis depends on D52, which acts as the Nucleophile. Y110 is a substrate binding site.

Belongs to the tRNA pseudouridine synthase TruA family. As to quaternary structure, homodimer.

It catalyses the reaction uridine(38/39/40) in tRNA = pseudouridine(38/39/40) in tRNA. In terms of biological role, formation of pseudouridine at positions 38, 39 and 40 in the anticodon stem and loop of transfer RNAs. This Geotalea daltonii (strain DSM 22248 / JCM 15807 / FRC-32) (Geobacter daltonii) protein is tRNA pseudouridine synthase A.